We begin with the raw amino-acid sequence, 304 residues long: Glutaminase (304 aa).

Positions 63, 114, 158, 165, 189, 240, and 258 each coordinate substrate.

The protein belongs to the glutaminase family. As to quaternary structure, homotetramer.

The catalysed reaction is L-glutamine + H2O = L-glutamate + NH4(+). The sequence is that of Glutaminase from Shewanella baltica (strain OS155 / ATCC BAA-1091).